The primary structure comprises 430 residues: Adenylosuccinate synthetase (430 aa).

Residues 12-18 (GDEGKGK) and 40-42 (GHT) contribute to the GTP site. The active-site Proton acceptor is the Asp13. Residues Asp13 and Gly40 each coordinate Mg(2+). IMP is bound by residues 13 to 16 (DEGK), 38 to 41 (NAGH), Thr128, Arg142, Gln223, Thr238, and Arg302. Catalysis depends on His41, which acts as the Proton donor. Residues 330 to 332 (SID) and 412 to 414 (SVG) each bind GTP.

This sequence belongs to the adenylosuccinate synthetase family. Homodimer. Requires Mg(2+) as cofactor.

Its subcellular location is the cytoplasm. The enzyme catalyses IMP + L-aspartate + GTP = N(6)-(1,2-dicarboxyethyl)-AMP + GDP + phosphate + 2 H(+). The protein operates within purine metabolism; AMP biosynthesis via de novo pathway; AMP from IMP: step 1/2. Its function is as follows. Plays an important role in the de novo pathway of purine nucleotide biosynthesis. Catalyzes the first committed step in the biosynthesis of AMP from IMP. The protein is Adenylosuccinate synthetase of Bacillus subtilis (strain 168).